Reading from the N-terminus, the 539-residue chain is CTP synthase (539 aa).

The interval 1–267 is amidoligase domain; it reads MTKYIFVTGG…DQKVVDFLHI (267 aa). Ser-13 is a CTP binding site. Ser-13 lines the UTP pocket. 14-19 serves as a coordination point for ATP; the sequence is SLGKGI. Residue Tyr-54 participates in L-glutamine binding. Asp-71 is an ATP binding site. Mg(2+) is bound by residues Asp-71 and Glu-141. CTP-binding positions include 148 to 150, 188 to 193, and Lys-224; these read DME and KSKPTQ. UTP-binding positions include 188 to 193 and Lys-224; that span reads KSKPTQ. The region spanning 294-537 is the Glutamine amidotransferase type-1 domain; that stretch reads KITLVGKYVE…IGAASGLQVD (244 aa). L-glutamine is bound at residue Gly-356. The active-site Nucleophile; for glutamine hydrolysis is Cys-383. L-glutamine is bound by residues 384–387, Glu-407, and Arg-465; that span reads LGMQ. Active-site residues include His-510 and Glu-512.

The protein belongs to the CTP synthase family. As to quaternary structure, homotetramer.

The catalysed reaction is UTP + L-glutamine + ATP + H2O = CTP + L-glutamate + ADP + phosphate + 2 H(+). It carries out the reaction L-glutamine + H2O = L-glutamate + NH4(+). The enzyme catalyses UTP + NH4(+) + ATP = CTP + ADP + phosphate + 2 H(+). It participates in pyrimidine metabolism; CTP biosynthesis via de novo pathway; CTP from UDP: step 2/2. With respect to regulation, allosterically activated by GTP, when glutamine is the substrate; GTP has no effect on the reaction when ammonia is the substrate. The allosteric effector GTP functions by stabilizing the protein conformation that binds the tetrahedral intermediate(s) formed during glutamine hydrolysis. Inhibited by the product CTP, via allosteric rather than competitive inhibition. Its function is as follows. Catalyzes the ATP-dependent amination of UTP to CTP with either L-glutamine or ammonia as the source of nitrogen. Regulates intracellular CTP levels through interactions with the four ribonucleotide triphosphates. The protein is CTP synthase of Lactobacillus delbrueckii subsp. bulgaricus (strain ATCC BAA-365 / Lb-18).